A 91-amino-acid polypeptide reads, in one-letter code: Large ribosomal subunit protein bL31B (91 aa).

This sequence belongs to the bacterial ribosomal protein bL31 family. Type B subfamily. In terms of assembly, part of the 50S ribosomal subunit.

This chain is Large ribosomal subunit protein bL31B, found in Neisseria meningitidis serogroup C (strain 053442).